The following is a 154-amino-acid chain: Myoglobin (154 aa).

In terms of domain architecture, Globin spans 2 to 148 (GLSDGEWQLV…FRKDIAAKYK (147 aa)). A Phosphoserine modification is found at serine 4. Histidine 65 is a nitrite binding site. Histidine 65 is a binding site for O2. Threonine 68 is subject to Phosphothreonine. Residue histidine 94 coordinates heme b.

This sequence belongs to the globin family. In terms of assembly, monomeric.

The protein resides in the cytoplasm. It localises to the sarcoplasm. It catalyses the reaction Fe(III)-heme b-[protein] + nitric oxide + H2O = Fe(II)-heme b-[protein] + nitrite + 2 H(+). The catalysed reaction is H2O2 + AH2 = A + 2 H2O. In terms of biological role, monomeric heme protein which primary function is to store oxygen and facilitate its diffusion within muscle tissues. Reversibly binds oxygen through a pentacoordinated heme iron and enables its timely and efficient release as needed during periods of heightened demand. Depending on the oxidative conditions of tissues and cells, and in addition to its ability to bind oxygen, it also has a nitrite reductase activity whereby it regulates the production of bioactive nitric oxide. Under stress conditions, like hypoxia and anoxia, it also protects cells against reactive oxygen species thanks to its pseudoperoxidase activity. The protein is Myoglobin (MB) of Peponocephala electra (Melon-headed whale).